We begin with the raw amino-acid sequence, 106 residues long: ATP-dependent Clp protease adapter protein ClpS (106 aa).

It belongs to the ClpS family. In terms of assembly, binds to the N-terminal domain of the chaperone ClpA.

In terms of biological role, involved in the modulation of the specificity of the ClpAP-mediated ATP-dependent protein degradation. The protein is ATP-dependent Clp protease adapter protein ClpS of Photobacterium profundum (strain SS9).